Consider the following 535-residue polypeptide: Alpha-1,3-mannosyl-glycoprotein 4-beta-N-acetylglucosaminyltransferase A (535 aa).

Topologically, residues M1–R4 are cytoplasmic. A helical; Signal-anchor for type II membrane protein transmembrane segment spans residues N5–W27. Residues Q28–N63 adopt a coiled-coil conformation. The Lumenal segment spans residues Q28–N535. N77 and N458 each carry an N-linked (GlcNAc...) asparagine glycan. Residue S474 is modified to Phosphoserine.

It belongs to the glycosyltransferase 54 family. The cofactor is a divalent metal cation. Post-translationally, N-glycosylated.

The protein resides in the golgi apparatus membrane. The protein localises to the secreted. It catalyses the reaction N(4)-{beta-D-GlcNAc-(1-&gt;2)-alpha-D-Man-(1-&gt;3)-[beta-D-GlcNAc-(1-&gt;2)-alpha-D-Man-(1-&gt;6)]-beta-D-Man-(1-&gt;4)-beta-D-GlcNAc-(1-&gt;4)-beta-D-GlcNAc}-L-asparaginyl-[protein] + UDP-N-acetyl-alpha-D-glucosamine = N(4)-{beta-D-GlcNAc-(1-&gt;2)-[beta-D-GlcNAc-(1-&gt;4)]-alpha-D-Man-(1-&gt;3)-[beta-D-GlcNAc-(1-&gt;2)-alpha-D-Man-(1-&gt;6)]-beta-D-Man-(1-&gt;4)-beta-D-GlcNAc-(1-&gt;4)-beta-D-GlcNAc}-L-asparaginyl-[protein] + UDP + H(+). It carries out the reaction an N(4)-{beta-D-GlcNAc-(1-&gt;2)-alpha-D-Man-(1-&gt;3)-[alpha-D-Man-(1-&gt;6)]-beta-D-Man-(1-&gt;4)-beta-D-GlcNAc-(1-&gt;4)-beta-D-GlcNAc}-L-asparaginyl-[protein] + UDP-N-acetyl-alpha-D-glucosamine = an N(4)-{beta-D-GlcNAc-(1-&gt;2)-[beta-D-GlcNAc-(1-&gt;4)]-alpha-D-Man-(1-&gt;3)-[alpha-D-Man-(1-&gt;6)]-beta-D-Man-(1-&gt;4)-beta-D-GlcNAc-(1-&gt;4)-beta-D-GlcNAc}-L-asparaginyl-[protein] + UDP + H(+). The enzyme catalyses an N(4)-{beta-D-GlcNAc-(1-&gt;2)-alpha-D-Man-(1-&gt;3)-[beta-D-GlcNAc-(1-&gt;2)-[beta-D-GlcNAc-(1-&gt;6)]-alpha-D-Man-(1-&gt;6)]-beta-D-Man-(1-&gt;4)-beta-D-GlcNAc-(1-&gt;4)-beta-D-GlcNAc}-L-asparaginyl-[protein] + UDP-N-acetyl-alpha-D-glucosamine = an N(4)-{beta-D-GlcNAc-(1-&gt;2)-[beta-D-GlcNAc-(1-&gt;4)]-alpha-D-Man-(1-&gt;3)-[beta-D-GlcNAc-(1-&gt;2)-[beta-D-GlcNAc-(1-&gt;6)]-alpha-D-Man-(1-&gt;6)]-beta-D-Man-(1-&gt;4)-beta-D-GlcNAc-(1-&gt;4)-beta-D-GlcNAc}-L-asparaginyl-[protein] + UDP + H(+). The catalysed reaction is an N(4)-{beta-D-GlcNAc-(1-&gt;2)-alpha-D-Man-(1-&gt;3)-[beta-D-GlcNAc-(1-&gt;2)-alpha-D-Man-(1-&gt;6)]-beta-D-Man-(1-&gt;4)-beta-D-GlcNAc-(1-&gt;4)-[alpha-L-Fuc-(1-&gt;6)]-beta-D-GlcNAc}-L-asparaginyl-[protein] + UDP-N-acetyl-alpha-D-glucosamine = N(4)-{beta-D-GlcNAc-(1-&gt;2)-[beta-D-GlcNAc-(1-&gt;4)]-alpha-D-Man-(1-&gt;3)-[beta-D-GlcNAc-(1-&gt;2)-alpha-D-Man-(1-&gt;6)]-beta-D-Man-(1-&gt;4)-beta-D-GlcNAc-(1-&gt;4)-[alpha-L-Fuc-(1-&gt;6)]-beta-D-GlcNAc}-asparaginyl-[protein] + UDP + H(+). It catalyses the reaction an N(4)-{beta-D-GlcNAc-(1-&gt;2)-alpha-D-Man-(1-&gt;3)-[beta-D-Gal-(1-&gt;4)-beta-D-GlcNAc-(1-&gt;2)-alpha-D-Man-(1-&gt;6)]-beta-D-Man-(1-&gt;4)-beta-D-GlcNAc-(1-&gt;4)-beta-D-GlcNAc}-L-asparaginyl-[protein] + UDP-N-acetyl-alpha-D-glucosamine = an N(4)-{beta-D-GlcNAc-(1-&gt;2)-[beta-D-GlcNAc-(1-&gt;4)]-alpha-D-Man-(1-&gt;3)-[beta-D-Gal-(1-&gt;4)-beta-D-GlcNAc-(1-&gt;2)-alpha-D-Man-(1-&gt;6)]-beta-D-Man-(1-&gt;4)-beta-D-GlcNAc-(1-&gt;4)-beta-D-GlcNAc}-L-asparaginyl-[protein] + UDP + H(+). It carries out the reaction N(4)-{beta-D-GlcNAc-(1-&gt;2)-alpha-D-Man-(1-&gt;3)-[alpha-D-Man-(1-&gt;3)-{alpha-D-Man-(1-&gt;6)}-alpha-D-Man-(1-&gt;6)]-beta-D-Man-(1-&gt;4)-beta-D-GlcNAc-(1-&gt;4)-beta-D-GlcNAc}-asparaginyl-[protein] + UDP-N-acetyl-alpha-D-glucosamine = N(4)-{beta-D-GlcNAc-(1-&gt;2)-[beta-D-GlcNAc-(1-&gt;4)]-alpha-D-Man-(1-&gt;3)-[alpha-D-Man-(1-&gt;3)-{alpha-D-Man-(1-&gt;6)}-alpha-D-Man-(1-&gt;6)]-beta-D-Man-(1-&gt;4)-beta-D-GlcNAc-(1-&gt;4)-beta-D-GlcNAc}-asparaginyl-[protein] + UDP + H(+). The enzyme catalyses N(4)-{beta-D-GlcNAc-(1-&gt;2)-alpha-D-Man-(1-&gt;3)-beta-D-Man-(1-&gt;4)-beta-D-GlcNAc-(1-&gt;4)-beta-D-GlcNAc}-asparaginyl-[protein] + UDP-N-acetyl-alpha-D-glucosamine = N(4)-{beta-D-GlcNAc-(1-&gt;2)-[beta-D-GlcNAc-(1-&gt;4)]-alpha-D-Man-(1-&gt;3)-beta-D-Man-(1-&gt;4)-beta-D-GlcNAc-(1-&gt;4)-beta-D-GlcNAc}-asparaginyl-[protein] + UDP + H(+). It participates in protein modification; protein glycosylation. With respect to regulation, inhibited by UDP. Its function is as follows. Glycosyltransferase that catalyze the transfer of GlcNAc from UDP-GlcNAc to the GlcNAcbeta1-2Manalpha1-3 arm of the core structure of N-linked glycans through a beta1-4 linkage and participates in the production of tri- and tetra-antennary N-linked sugar chains. Involved in glucose transport by mediating SLC2A2/GLUT2 glycosylation, thereby controlling cell-surface expression of SLC2A2 in pancreatic beta cells. This chain is Alpha-1,3-mannosyl-glycoprotein 4-beta-N-acetylglucosaminyltransferase A, found in Pongo abelii (Sumatran orangutan).